The chain runs to 430 residues: Proteinase-activated receptor 1 (430 aa).

The first 21 residues, 1–21 (MGPRRLLIVALGLSLCGPLLS), serve as a signal peptide directing secretion. The propeptide at 22–41 (SRVPMSQPESERTDATVNPR) is removed for receptor activation. Residues 42–107 (SFFLRNPSEN…SGYLTSPWLT (66 aa)) lie on the Extracellular side of the membrane. N-linked (GlcNAc...) asparagine glycans are attached at residues Asn-67 and Asn-80. Residues 108–133 (LFMPSVYTIVFIVSLPLNVLAIAVFV) form a helical membrane-spanning segment. Residues 134–142 (LRMKVKKPA) are Cytoplasmic-facing. Residues 143–162 (VVYMLHLAMADVLFVSVLPF) traverse the membrane as a helical segment. Over 163-181 (KISYYFSGTDWQFGSGMCR) the chain is Extracellular. Cys-180 and Cys-259 are oxidised to a cystine. A helical transmembrane segment spans residues 182–203 (FATAAFYGNMYASIMLMTVISI). The Cytoplasmic portion of the chain corresponds to 204–223 (DRFLAVVYPIQSLSWRTLGR). Residues 224–244 (ANFTCVVIWVMAIMGVVPLLL) traverse the membrane as a helical segment. Topologically, residues 245–273 (KEQTTRVPGLNITTCHDVLSENLMQGFYS) are extracellular. Residue Asn-255 is glycosylated (N-linked (GlcNAc...) asparagine). Residues 274 to 293 (YYFSAFSAIFFLVPLIVSTV) traverse the membrane as a helical segment. Residues 294–316 (CYTSIIRCLSSSAVANRSKKSRA) are Cytoplasmic-facing. A helical membrane pass occupies residues 317–339 (LFLSAAVFCIFIVCFGPTNVLLI). Residues 340–354 (VHYLFLSDSPGTEAA) are Extracellular-facing. The helical transmembrane segment at 355 to 379 (YFAYLLCVCVSSVSCCIDPLIYYYA) threads the bilayer. The Cytoplasmic portion of the chain corresponds to 380–430 (SSECQRHLYSILCCKESSDPNSCNSTGQLMPSKMDTCSSHLNNSIYKKLLA). Ser-423 carries the post-translational modification Phosphoserine.

It belongs to the G-protein coupled receptor 1 family. Proteolytic cleavage by thrombin generates a new N-terminus that functions as a tethered ligand. Also proteolytically cleaved by cathepsin CTSG. In terms of processing, phosphorylated in the C-terminal tail; probably mediating desensitization prior to the uncoupling and internalization of the receptor.

The protein resides in the cell membrane. Its function is as follows. High affinity receptor that binds the activated thrombin, leading to calcium release from intracellular stores. The thrombin-activated receptor signaling pathway is mediated through PTX-insensitive G proteins, activation of phospholipase C resulting in the production of 1D-myo-inositol 1,4,5-trisphosphate (InsP3) which binds to InsP3 receptors causing calcium release from the stores. In astrocytes, the calcium released into the cytosol allows the Ca(2+)-dependent release of L-glutamate into the synaptic cleft through BEST1, that targets the neuronal postsynaptic GRIN2A/NMDAR receptor resulting in the synaptic plasticity regulation. May play a role in platelets activation and in vascular development. Mediates up-regulation of pro-inflammatory cytokines, such as MCP-1/CCL2 and IL6, triggered by coagulation factor Xa (F10) in cardiac fibroblasts and umbilical vein endothelial cells. The chain is Proteinase-activated receptor 1 from Mus musculus (Mouse).